A 237-amino-acid chain; its full sequence is Class B acid phosphatase (237 aa).

The first 25 residues, 1–25 (MRKITLALSAACLLFSLNNAVVARA), serve as a signal peptide directing secretion. The active-site Nucleophile is aspartate 69. Aspartate 69 and aspartate 71 together coordinate Mg(2+). Residue aspartate 71 is the Proton donor of the active site. Substrate-binding positions include 137-138 (TG) and lysine 177. Residue aspartate 192 participates in Mg(2+) binding.

Belongs to the class B bacterial acid phosphatase family. In terms of assembly, homotetramer. Mg(2+) serves as cofactor.

The protein resides in the periplasm. The enzyme catalyses a phosphate monoester + H2O = an alcohol + phosphate. In terms of biological role, dephosphorylates several organic phosphate monoesters. Also has a phosphotransferase activity catalyzing the transfer of low-energy phosphate groups from organic phosphate monoesters to free hydroxyl groups of various organic compounds. The chain is Class B acid phosphatase from Enterobacter sp. (strain 638).